Reading from the N-terminus, the 186-residue chain is Acireductone dioxygenase (186 aa).

Positions 89, 91, 95, and 134 each coordinate Fe(2+). Ni(2+) contacts are provided by H89, H91, E95, and H134.

The protein belongs to the acireductone dioxygenase (ARD) family. Fe(2+) serves as cofactor. Ni(2+) is required as a cofactor.

The protein localises to the cytoplasm. It localises to the nucleus. The catalysed reaction is 1,2-dihydroxy-5-(methylsulfanyl)pent-1-en-3-one + O2 = 4-methylsulfanyl-2-oxobutanoate + formate + 2 H(+). The enzyme catalyses 1,2-dihydroxy-5-(methylsulfanyl)pent-1-en-3-one + O2 = 3-(methylsulfanyl)propanoate + CO + formate + 2 H(+). It participates in amino-acid biosynthesis; L-methionine biosynthesis via salvage pathway; L-methionine from S-methyl-5-thio-alpha-D-ribose 1-phosphate: step 5/6. Its function is as follows. Catalyzes 2 different reactions between oxygen and the acireductone 1,2-dihydroxy-3-keto-5-methylthiopentene (DHK-MTPene) depending upon the metal bound in the active site. Fe-containing acireductone dioxygenase (Fe-ARD) produces formate and 2-keto-4-methylthiobutyrate (KMTB), the alpha-ketoacid precursor of methionine in the methionine recycle pathway. Ni-containing acireductone dioxygenase (Ni-ARD) produces methylthiopropionate, carbon monoxide and formate, and does not lie on the methionine recycle pathway. The sequence is that of Acireductone dioxygenase from Drosophila melanogaster (Fruit fly).